We begin with the raw amino-acid sequence, 253 residues long: Ubiquinone/menaquinone biosynthesis C-methyltransferase UbiE (253 aa).

S-adenosyl-L-methionine is bound by residues Thr76, Asp97, and 125-126 (NA).

This sequence belongs to the class I-like SAM-binding methyltransferase superfamily. MenG/UbiE family.

It catalyses the reaction a 2-demethylmenaquinol + S-adenosyl-L-methionine = a menaquinol + S-adenosyl-L-homocysteine + H(+). The catalysed reaction is a 2-methoxy-6-(all-trans-polyprenyl)benzene-1,4-diol + S-adenosyl-L-methionine = a 5-methoxy-2-methyl-3-(all-trans-polyprenyl)benzene-1,4-diol + S-adenosyl-L-homocysteine + H(+). It functions in the pathway quinol/quinone metabolism; menaquinone biosynthesis; menaquinol from 1,4-dihydroxy-2-naphthoate: step 2/2. Its pathway is cofactor biosynthesis; ubiquinone biosynthesis. In terms of biological role, methyltransferase required for the conversion of demethylmenaquinol (DMKH2) to menaquinol (MKH2) and the conversion of 2-polyprenyl-6-methoxy-1,4-benzoquinol (DDMQH2) to 2-polyprenyl-3-methyl-6-methoxy-1,4-benzoquinol (DMQH2). This Bradyrhizobium sp. (strain BTAi1 / ATCC BAA-1182) protein is Ubiquinone/menaquinone biosynthesis C-methyltransferase UbiE.